The sequence spans 178 residues: CASP-like protein 5A1 (178 aa).

Low complexity predominate over residues M1 to V11. The tract at residues M1–G25 is disordered. The Cytoplasmic portion of the chain corresponds to M1–T37. The chain crosses the membrane as a helical span at residues A38–M58. Topologically, residues A59–S69 are extracellular. A helical transmembrane segment spans residues F70–V90. Over D91–R105 the chain is Cytoplasmic. The helical transmembrane segment at A106–C126 threads the bilayer. The Extracellular portion of the chain corresponds to A127–S152. Residues A153 to W173 form a helical membrane-spanning segment. Topologically, residues S174 to G178 are cytoplasmic.

Belongs to the Casparian strip membrane proteins (CASP) family. In terms of assembly, homodimer and heterodimers.

The protein localises to the cell membrane. The sequence is that of CASP-like protein 5A1 from Oryza sativa subsp. japonica (Rice).